The primary structure comprises 118 residues: Large ribosomal subunit protein uL18 (118 aa).

The protein belongs to the universal ribosomal protein uL18 family. Part of the 50S ribosomal subunit; part of the 5S rRNA/L5/L18/L25 subcomplex. Contacts the 5S and 23S rRNAs.

Functionally, this is one of the proteins that bind and probably mediate the attachment of the 5S RNA into the large ribosomal subunit, where it forms part of the central protuberance. This Mycoplasmopsis pulmonis (strain UAB CTIP) (Mycoplasma pulmonis) protein is Large ribosomal subunit protein uL18.